The sequence spans 202 residues: MKIQKVLVIKSSMTENLPSGSFSSALSDKFMEYYRKENPIDKIIELNLNDQKDLISLSSQNFNTFFTDGVSDKYIDQLKSVDKVVISSPMTNFNYTALLKNYLDRILVANKTFSYKYSKKGEAIGLLPHLKVQILTTQGAPLGWYTWGDHTKNLEGTFEFIGAKVAKSVVMDGLKTPQYSSLKAPEALDLFDKVIKTAAENF.

Residues Ser-12 and 21–23 (SFS) contribute to the FMN site.

The protein belongs to the azoreductase type 1 family. In terms of assembly, homodimer. It depends on FMN as a cofactor.

It carries out the reaction 2 a quinone + NADH + H(+) = 2 a 1,4-benzosemiquinone + NAD(+). The enzyme catalyses N,N-dimethyl-1,4-phenylenediamine + anthranilate + 2 NAD(+) = 2-(4-dimethylaminophenyl)diazenylbenzoate + 2 NADH + 2 H(+). Quinone reductase that provides resistance to thiol-specific stress caused by electrophilic quinones. Its function is as follows. Also exhibits azoreductase activity. Catalyzes the reductive cleavage of the azo bond in aromatic azo compounds to the corresponding amines. This is FMN-dependent NADH:quinone oxidoreductase from Mycoplasma mobile (strain ATCC 43663 / 163K / NCTC 11711) (Mesomycoplasma mobile).